Reading from the N-terminus, the 131-residue chain is UPF0102 protein H16_A3579 (131 aa).

The protein belongs to the UPF0102 family.

This is UPF0102 protein H16_A3579 from Cupriavidus necator (strain ATCC 17699 / DSM 428 / KCTC 22496 / NCIMB 10442 / H16 / Stanier 337) (Ralstonia eutropha).